The sequence spans 201 residues: Regulator of G-protein signaling rgs-1 (201 aa).

Residues S37–T156 form the RGS domain. Positions G168–V201 are disordered. The segment covering D170–R183 has biased composition (basic and acidic residues).

In terms of tissue distribution, expressed in most or all neurons.

Its function is as follows. Inhibits G protein signaling in nervous system, interacting preferentially with the G(O) subfamily member goa-1. In vitro, protein acts as a GTPase activator of goa-1. Rgs-1 and rgs-2 redundantly adjust signaling when worms are fed to allow rapid induction of egg-laying behavior. The polypeptide is Regulator of G-protein signaling rgs-1 (rgs-1) (Caenorhabditis elegans).